Consider the following 647-residue polypeptide: Threonine--tRNA ligase (647 aa).

The TGS domain maps to 1 to 61 (MINITFPDGA…TEDGSIEIVT (61 aa)). Positions 242–540 (DHRKLGKELD…LIENYKGAFP (299 aa)) are catalytic. Positions 336, 387, and 517 each coordinate Zn(2+).

The protein belongs to the class-II aminoacyl-tRNA synthetase family. As to quaternary structure, homodimer. Requires Zn(2+) as cofactor.

The protein localises to the cytoplasm. The enzyme catalyses tRNA(Thr) + L-threonine + ATP = L-threonyl-tRNA(Thr) + AMP + diphosphate + H(+). Catalyzes the attachment of threonine to tRNA(Thr) in a two-step reaction: L-threonine is first activated by ATP to form Thr-AMP and then transferred to the acceptor end of tRNA(Thr). Also edits incorrectly charged L-seryl-tRNA(Thr). This is Threonine--tRNA ligase from Streptococcus pneumoniae (strain P1031).